The sequence spans 455 residues: GTPase Der (455 aa).

EngA-type G domains lie at 4–169 (PVVA…PPKD) and 178–353 (IQLS…EQHR). GTP is bound by residues 10–17 (GRPNVGKS), 57–61 (DTGGL), 120–123 (NKCE), 184–191 (GRPNVGKS), 231–235 (DTAGI), and 296–299 (NKWD). One can recognise a KH-like domain in the interval 354–439 (RRVSTSVVNE…PVKLFWRGKQ (86 aa)).

This sequence belongs to the TRAFAC class TrmE-Era-EngA-EngB-Septin-like GTPase superfamily. EngA (Der) GTPase family. Associates with the 50S ribosomal subunit.

Functionally, GTPase that plays an essential role in the late steps of ribosome biogenesis. The protein is GTPase Der of Synechococcus sp. (strain CC9311).